We begin with the raw amino-acid sequence, 1663 residues long: Kotanin synthase (1663 aa).

An N-terminal acylcarrier protein transacylase domain (SAT) region spans residues Arg19 to His168. In terms of domain architecture, Ketosynthase family 3 (KS3) spans Asp301 to Glu731. Catalysis depends on for beta-ketoacyl synthase activity residues Cys474, His609, and His650. Residues Phe830–Val1149 form a malonyl-CoA:ACP transacylase (MAT) domain region. The segment at Thr1209–Asp1527 is product template (PT) domain. Residues His1213–Ser1349 form an N-terminal hotdog fold region. Residues His1213 to Asn1523 enclose the PKS/mFAS DH domain. The active-site Proton acceptor; for dehydratase activity is His1245. The interval Gln1376–Asn1523 is C-terminal hotdog fold. Asp1434 acts as the Proton donor; for dehydratase activity in catalysis. Residues Asp1544 to Val1580 are disordered. The Carrier domain occupies Lys1586–Trp1663. At Ser1623 the chain carries O-(pantetheine 4'-phosphoryl)serine.

The cofactor is pantetheine 4'-phosphate.

It functions in the pathway secondary metabolite biosynthesis. Functionally, non-reducing polyketide synthase; part of the gene cluster that mediates the biosynthesis of the bicoumarin kotanin. The non-reducing polyketide synthase ktnS first catalyzes the formation of the pentaketidic 4,7-dihydroxy-5-methylcoumarin from acetyl coenzyme A and 4 malonyl coenzyme A molecules. Further O-methylation by ktnB leads to the formation of 7-demethylsiderin. Then, an oxidative phenol coupling catalyzed by the cytochrome P450 monooxygenase ktnC forms the 8,8'-dimer P-orlandin via dimerization the monomeric precursor, 7-demethylsiderin. P-orlandin is subsequently O-methylated in a stepwise fashion to demethylkotanin and kotanin. In Aspergillus niger (strain ATCC MYA-4892 / CBS 513.88 / FGSC A1513), this protein is Kotanin synthase.